The sequence spans 164 residues: D-aminoacyl-tRNA deacylase (164 aa).

Positions 72 and 89 each coordinate tRNA. The active-site Nucleophile is Thr90. Residues 104-107 carry the C-terminal adenosine nucleotide of tRNA motif; that stretch reads HLAK. The short motif at 149 to 150 is the Gly-cisPro motif, allows the protein to recognize chirality of D-amino acids element; that stretch reads GP.

Belongs to the DTD family. In terms of assembly, homodimer.

The protein resides in the cytoplasm. It catalyses the reaction glycyl-tRNA(Ala) + H2O = tRNA(Ala) + glycine + H(+). The enzyme catalyses a D-aminoacyl-tRNA + H2O = a tRNA + a D-alpha-amino acid + H(+). It carries out the reaction D-tyrosyl-tRNA(Tyr) + H2O = D-tyrosine + tRNA(Tyr). Its function is as follows. D-aminoacyl-tRNA deacylase, with no observable activity on tRNAs charged with their cognate L-amino acid. Probably acts by rejecting L-amino acids from its binding site rather than specific recognition of D-amino acids. Catalyzes the hydrolysis of D-tyrosyl-tRNA(Tyr), has no activity on correctly charged L-tyrosyl-tRNA(Tyr). Hydrolyzes correctly charged, achiral, glycyl-tRNA(Gly). Deacylates mischarged D.melanogaster and E.coli glycyl-tRNA(Ala). Probably acts via tRNA-based rather than protein-based catalysis. Acts on tRNAs only when the D-amino acid is either attached to the ribose 3'-OH or transferred to the 3'-OH from the 2'-OH through rapid transesterification. Binds a number of other D-amino acids (D-Arg, D-Glu, D-His, D-Lys, D-Ser), suggesting it may also deacylate other mischarged tRNAs. In Plasmodium falciparum (isolate 3D7), this protein is D-aminoacyl-tRNA deacylase.